A 177-amino-acid polypeptide reads, in one-letter code: Putative fimbrin-like protein FimI (177 aa).

Positions 1 to 19 (MIRKGAALVGLVLMSPVIA) are cleaved as a signal peptide. An intrachain disulfide couples Cys-40 to Cys-81.

The protein belongs to the fimbrial protein family.

It is found in the fimbrium. In Salmonella typhi, this protein is Putative fimbrin-like protein FimI (fimI).